A 900-amino-acid chain; its full sequence is Nitrate reductase [NADH] (900 aa).

Residue Cys-172 participates in Mo-molybdopterin binding. In terms of domain architecture, Cytochrome b5 heme-binding spans 521-596 (TKMYSLSEVK…LEDYRVGELI (76 aa)). Heme-binding residues include His-556 and His-579. One can recognise an FAD-binding FR-type domain in the interval 644 to 756 (REKIPCKLIS…KGPLGHIEYT (113 aa)). FAD is bound by residues 696–699 (RAYT), 713–717 (VVKVY), Phe-718, Phe-725, 730–732 (AMS), and Thr-783.

This sequence belongs to the nitrate reductase family. In terms of assembly, homodimer. FAD serves as cofactor. Requires heme as cofactor. It depends on Mo-molybdopterin as a cofactor.

The catalysed reaction is nitrite + NAD(+) + H2O = nitrate + NADH + H(+). In terms of biological role, nitrate reductase is a key enzyme involved in the first step of nitrate assimilation in plants, fungi and bacteria. This Lotus japonicus (Lotus corniculatus var. japonicus) protein is Nitrate reductase [NADH] (NIA).